Here is a 217-residue protein sequence, read N- to C-terminus: UPF0323 lipoprotein HPP12_0232 (217 aa).

The N-terminal stretch at Met1–Gly27 is a signal peptide. Residue Cys28 is the site of N-palmitoyl cysteine attachment. Cys28 carries the S-diacylglycerol cysteine lipid modification. Over residues Gln160 to Arg171 the composition is skewed to polar residues. The tract at residues Gln160–Ser217 is disordered. A compositionally biased stretch (low complexity) spans Ser172–Ser185. A compositionally biased stretch (polar residues) spans Met186 to Phe197. The segment covering Ser199 to Ser210 has biased composition (low complexity).

It belongs to the UPF0323 family.

It localises to the cell membrane. The sequence is that of UPF0323 lipoprotein HPP12_0232 from Helicobacter pylori (strain P12).